The chain runs to 207 residues: Large ribosomal subunit protein bL25 (207 aa).

This sequence belongs to the bacterial ribosomal protein bL25 family. CTC subfamily. As to quaternary structure, part of the 50S ribosomal subunit; part of the 5S rRNA/L5/L18/L25 subcomplex. Contacts the 5S rRNA. Binds to the 5S rRNA independently of L5 and L18.

Functionally, this is one of the proteins that binds to the 5S RNA in the ribosome where it forms part of the central protuberance. This Azorhizobium caulinodans (strain ATCC 43989 / DSM 5975 / JCM 20966 / LMG 6465 / NBRC 14845 / NCIMB 13405 / ORS 571) protein is Large ribosomal subunit protein bL25.